We begin with the raw amino-acid sequence, 307 residues long: Phosphonates import ATP-binding protein PhnC (307 aa).

Residues 4-252 form the ABC transporter domain; the sequence is IRIERLSKTF…RLHALYGDDA (249 aa). ATP is bound at residue 37 to 44; the sequence is GASGSGKS. Basic and acidic residues predominate over residues 265–275; that stretch reads AAREAAGEPAR. Residues 265–307 form a disordered region; sequence AAREAAGEPARRAPAAFDSAGSPDLPDSQPASPRRMLAASSMR.

It belongs to the ABC transporter superfamily. Phosphonates importer (TC 3.A.1.9.1) family. The complex is composed of two ATP-binding proteins (PhnC), two transmembrane proteins (PhnE) and a solute-binding protein (PhnD).

Its subcellular location is the cell inner membrane. It catalyses the reaction phosphonate(out) + ATP + H2O = phosphonate(in) + ADP + phosphate + H(+). Part of the ABC transporter complex PhnCDE involved in phosphonates import. Responsible for energy coupling to the transport system. This chain is Phosphonates import ATP-binding protein PhnC, found in Burkholderia pseudomallei (strain 1710b).